Here is a 636-residue protein sequence, read N- to C-terminus: uncharacterized protein (636 aa).

The next 3 membrane-spanning stretches (helical) occupy residues 12-32 (AVIY…FGSI), 34-54 (IMHL…TTTG), and 75-95 (IGAG…FMSF). An RCK N-terminal domain is found at 112–231 (KNHFILCGFG…KKAGANRIIS (120 aa)).

The protein localises to the cell membrane. This is an uncharacterized protein from Methanothermus fervidus (strain ATCC 43054 / DSM 2088 / JCM 10308 / V24 S).